The sequence spans 354 residues: Glucose 1-dehydrogenase (354 aa).

The tract at residues 1-27 (MKVIGVTRDDDGPQLLERERPSPDPGE) is disordered. The span at 7 to 22 (TRDDDGPQLLERERPS) shows a compositional bias: basic and acidic residues. Aspartate 38 is a Zn(2+) binding site. Threonine 40 serves as a coordination point for substrate. Histidine 63 and glutamate 64 together coordinate Zn(2+). A disordered region spans residues 91-110 (PNGETNEYFRRGEPDMAPDG). Substrate-binding residues include glutamate 114 and glutamate 150. Glutamate 150 is a Zn(2+) binding site. Residues 181 to 184 (NGSL), 204 to 205 (RR), 269 to 271 (LGI), and 298 to 300 (TVN) each bind NADP(+). Position 300 (asparagine 300) interacts with substrate.

The protein belongs to the zinc-containing alcohol dehydrogenase family. Glucose 1-dehydrogenase subfamily. Zn(2+) is required as a cofactor.

It carries out the reaction D-glucose + NAD(+) = D-glucono-1,5-lactone + NADH + H(+). The enzyme catalyses D-glucose + NADP(+) = D-glucono-1,5-lactone + NADPH + H(+). Its function is as follows. Catalyzes the NAD(P)(+)-dependent oxidation of D-glucose to D-gluconate via gluconolactone. Can utilize both NAD(+) and NADP(+) as electron acceptor. Is involved in the degradation of glucose through a modified Entner-Doudoroff pathway. This chain is Glucose 1-dehydrogenase, found in Haloarcula marismortui (strain ATCC 43049 / DSM 3752 / JCM 8966 / VKM B-1809) (Halobacterium marismortui).